The sequence spans 59 residues: Temporin-CDYe (59 aa).

The signal sequence occupies residues 1-22; that stretch reads MFTLKKSMLLLLFLGTISLTLC. The propeptide occupies 23–42; sequence EEERDANEEEENGGEVKVEE.

It belongs to the frog skin active peptide (FSAP) family. Temporin subfamily. In terms of tissue distribution, expressed by the skin glands.

Its subcellular location is the secreted. In terms of biological role, antimicrobial peptide. The polypeptide is Temporin-CDYe (Rana dybowskii (Dybovsky's frog)).